The following is a 575-amino-acid chain: FAD-dependent monooxygenase rstn6 (575 aa).

An N-terminal signal peptide occupies residues 1 to 17 (MYDVIVIGAGWCGLVAA). Isoleucine 106 contacts FAD. N-linked (GlcNAc...) asparagine glycans are attached at residues asparagine 239 and asparagine 295.

Belongs to the FAD-binding monooxygenase family. FAD is required as a cofactor.

It participates in antifungal biosynthesis. Functionally, FAD-dependent monooxygenase; part of the gene cluster that mediates the biosynthesis of the tetrahydropyranyl antifungal agent restricticin that acts as an inhibitor of CYP51 and blocks the ergosterol biosynthesis. The highly reducing polyketide synthase rstn3, the short chain dehydrogenase rstn4, the cyclase rstn5, the FAD-dependent monooxygenase rstn6 and the enoylreductase rstn7 are required to generate the first stable intermediate desmethylrestrictinol. Rstn3 with rstn7 biosynthesize the first polyketide chain intermediate that is reduced by rstn4, followed by epoxidation by rstn6 before 6-endo cyclization via epoxide opening by rstn5 leads to desmethylrestrictinol. The methyltransferase rstn1 then catalyzes the C4 O-methylation of desmethylrestrictinol to produce restrictinol, and the nonribosomal peptide synthetase rstn8 catalyzes the C3 esterification of restrictinol with glycine that leads to restricticin. The chain is FAD-dependent monooxygenase rstn6 from Aspergillus nomiae NRRL (strain ATCC 15546 / NRRL 13137 / CBS 260.88 / M93).